The following is a 414-amino-acid chain: MGLKKFLEDIEHHFEPGGKHEKWFALYEAAATLFYTPGLVTKKSSHVRDSVDLKRIMIMVWFAVFPAMFWGMYNAGGQAIAALNHMYAGDQLAQIIAGNWHYWLTEMLGGTISADASWGSKMLLGATYFLPIYATVFLVGGFWEVLFCMVRKHEVNEGFFVTSILFALIVPPTLPLWQAALGITFGVVVAKEIFGGTGRNFLNPALAGRAFLFFAYPAQISGDVVWTAADGFSGATALSQWAQGGNSALVNTVTGAPITWLDAFIGNIPGSIGEVSTLALLIGAAMIVYMRIASWRIIAGVMIGMIVVSTLFNVIGSDTNAMFSMPWHWHLVLGGFAFGMFFMATDPVSASFTNKGKWWYGILIGAMCVMIRVVNPAYPEGMMLAILFANLFAPLFDHLVVEKNIKRRQARYGK.

Helical transmembrane passes span 23-40 (WFAL…PGLV), 56-76 (IMIM…YNAG), 129-149 (FLPI…LFCM), and 164-184 (ILFA…LGIT). At Thr-236 the chain carries FMN phosphoryl threonine. The next 5 helical transmembrane spans lie at 268-288 (IPGS…AMIV), 297-317 (IIAG…VIGS), 322-342 (MFSM…GMFF), 358-378 (WWYG…NPAY), and 381-401 (GMML…HLVV).

It belongs to the NqrB/RnfD family. In terms of assembly, composed of six subunits; NqrA, NqrB, NqrC, NqrD, NqrE and NqrF. The cofactor is FMN.

It is found in the cell inner membrane. It carries out the reaction a ubiquinone + n Na(+)(in) + NADH + H(+) = a ubiquinol + n Na(+)(out) + NAD(+). Its function is as follows. NQR complex catalyzes the reduction of ubiquinone-1 to ubiquinol by two successive reactions, coupled with the transport of Na(+) ions from the cytoplasm to the periplasm. NqrA to NqrE are probably involved in the second step, the conversion of ubisemiquinone to ubiquinol. The sequence is that of Na(+)-translocating NADH-quinone reductase subunit B from Vibrio vulnificus (strain CMCP6).